Here is a 335-residue protein sequence, read N- to C-terminus: ADP-L-glycero-D-manno-heptose-6-epimerase (335 aa).

NADP(+)-binding positions include 11–12 (FI), 32–33 (DD), Lys39, 75–79 (EGACS), and Asn92. The active-site Proton acceptor is Tyr139. Lys143 is a binding site for NADP(+). Asn172 lines the substrate pocket. NADP(+) contacts are provided by Val173 and Lys181. The active-site Proton acceptor is the Lys181. Residues Arg183, His190, 204 to 207 (FGDY), Arg217, and Tyr296 each bind substrate.

The protein belongs to the NAD(P)-dependent epimerase/dehydratase family. HldD subfamily. As to quaternary structure, homopentamer. It depends on NADP(+) as a cofactor.

The catalysed reaction is ADP-D-glycero-beta-D-manno-heptose = ADP-L-glycero-beta-D-manno-heptose. The protein operates within nucleotide-sugar biosynthesis; ADP-L-glycero-beta-D-manno-heptose biosynthesis; ADP-L-glycero-beta-D-manno-heptose from D-glycero-beta-D-manno-heptose 7-phosphate: step 4/4. Its function is as follows. Catalyzes the interconversion between ADP-D-glycero-beta-D-manno-heptose and ADP-L-glycero-beta-D-manno-heptose via an epimerization at carbon 6 of the heptose. The sequence is that of ADP-L-glycero-D-manno-heptose-6-epimerase from Polaromonas naphthalenivorans (strain CJ2).